Reading from the N-terminus, the 130-residue chain is Protein ApaG (130 aa).

One can recognise an ApaG domain in the interval 3–127 (SAVTRGIEVT…FSLDVPEQRR (125 aa)).

The chain is Protein ApaG from Brucella abortus (strain S19).